The following is a 226-amino-acid chain: Ribonuclease 3 (226 aa).

In terms of domain architecture, RNase III spans 6–128 (VNQLQKKLGY…LIGAIFLDSD (123 aa)). Position 41 (Glu41) interacts with Mg(2+). Asp45 is an active-site residue. Residues Asp114 and Glu117 each contribute to the Mg(2+) site. Glu117 is an active-site residue. One can recognise a DRBM domain in the interval 155 to 225 (DPKTRLQEYL…AEQALIQLEL (71 aa)).

Belongs to the ribonuclease III family. In terms of assembly, homodimer. It depends on Mg(2+) as a cofactor.

Its subcellular location is the cytoplasm. It carries out the reaction Endonucleolytic cleavage to 5'-phosphomonoester.. Digests double-stranded RNA. Involved in the processing of primary rRNA transcript to yield the immediate precursors to the large and small rRNAs (23S and 16S). Processes some mRNAs, and tRNAs when they are encoded in the rRNA operon. Processes pre-crRNA and tracrRNA of type II CRISPR loci if present in the organism. This chain is Ribonuclease 3, found in Proteus mirabilis (strain HI4320).